The chain runs to 836 residues: Protein AKNAD1 (836 aa).

3 stretches are compositionally biased toward polar residues: residues 159-172 (SWPKEQTPELTDQL), 181-192 (SNKPGSATTTEE), and 227-248 (SYQGQSPQKQQTEKANSGNTFK). Disordered stretches follow at residues 159-248 (SWPK…NTFK) and 303-325 (LETTPESNCVEKQHQEQKGKITE). Residues 311-323 (CVEKQHQEQKGKI) show a composition bias toward basic and acidic residues. The stretch at 372 to 484 (QKISQGKQMC…DVKEKMDESK (113 aa)) forms a coiled coil. Disordered regions lie at residues 510–545 (SNEIPKEHPGHPSGPRGSGGSEVTGTPQGGPQEAPN) and 575–596 (MRLSSNSGEDPNGTPRRQDCAE).

The protein belongs to the AKNA family.

The chain is Protein AKNAD1 (AKNAD1) from Homo sapiens (Human).